Consider the following 253-residue polypeptide: Protein PET20, mitochondrial (253 aa).

The transit peptide at 1-36 (MLKLARPFIPPLSRNNAISSGIVLTSRRFQSSFTFL) directs the protein to the mitochondrion. Positions 44 to 93 (KNQMKSKRKKGSKKAAYHRQPPEHEHTAPLIKQNKTITKKEHSDVRGSHL) are disordered. Basic residues predominate over residues 47–60 (MKSKRKKGSKKAAY). Basic and acidic residues predominate over residues 81–90 (TKKEHSDVRG).

It localises to the mitochondrion. Functionally, required for respiratory growth, stability of the mitochondrial genome and for proper assembly or maintenance of mitochondrial proteins. This chain is Protein PET20, mitochondrial (PET20), found in Saccharomyces cerevisiae (strain ATCC 204508 / S288c) (Baker's yeast).